The following is a 260-amino-acid chain: Global transcriptional regulator CodY (260 aa).

The GAF domain stretch occupies residues 1 to 159 (MPNLLEKTRK…SSTVVGIQLL (159 aa)). A DNA-binding region (H-T-H motif) is located at residues 207 to 226 (ASVIADRIGITRSVIVNALR).

It belongs to the CodY family.

The protein resides in the cytoplasm. Functionally, DNA-binding global transcriptional regulator which is involved in the adaptive response to starvation and acts by directly or indirectly controlling the expression of numerous genes in response to nutrient availability. During rapid exponential growth, CodY is highly active and represses genes whose products allow adaptation to nutrient depletion. This chain is Global transcriptional regulator CodY, found in Streptococcus pyogenes serotype M3 (strain SSI-1).